A 276-amino-acid polypeptide reads, in one-letter code: MSIDIQWNLLDEQIAEKLRAKLDTKIAKLSLPRYIQDLHITSFDFGTSVPDVTIQDICDPDPRLYEETLYSDDSSSLDDEESDREEENMTELPPYGATENGVHKKDSTDVNMNHTQTSNQQSPQNIAESNIHKSVPNSAETPSFLRNSIGDVQIIAHVQYSGNMTMSMEACLAVNYPSKDFAMLPFTLQLSDIVLDGTLVVALIASHVHVCFVDTLEHNRGDVQSSIIKNIRVDSVVGEPNKQVLKNVAKVEKFVVQKICQIVEDEFVWPSYFTLY.

Residues 1–276 (MSIDIQWNLL…FVWPSYFTLY (276 aa)) form the SMP-LTD domain. A disordered region spans residues 68 to 104 (TLYSDDSSSLDDEESDREEENMTELPPYGATENGVHK). The span at 75–89 (SSLDDEESDREEENM) shows a compositional bias: acidic residues.

It belongs to the MDM12 family. As to quaternary structure, component of the ER-mitochondria encounter structure (ERMES) or MDM complex, composed of mmm1, mdm10, mdm12 and mdm34. A mmm1 homodimer associates with one molecule of mdm12 on each side in a pairwise head-to-tail manner, and the SMP-LTD domains of mmm1 and mdm12 generate a continuous hydrophobic tunnel for phospholipid trafficking.

The protein localises to the mitochondrion outer membrane. The protein resides in the endoplasmic reticulum membrane. In terms of biological role, component of the ERMES/MDM complex, which serves as a molecular tether to connect the endoplasmic reticulum (ER) and mitochondria. Components of this complex are involved in the control of mitochondrial shape and protein biogenesis, and function in nonvesicular lipid trafficking between the ER and mitochondria. Mdm12 is required for the interaction of the ER-resident membrane protein mmm1 and the outer mitochondrial membrane-resident beta-barrel protein mdm10. The mdm12-mmm1 subcomplex functions in the major beta-barrel assembly pathway that is responsible for biogenesis of all mitochondrial outer membrane beta-barrel proteins, and acts in a late step after the SAM complex. The mdm10-mdm12-mmm1 subcomplex further acts in the TOM40-specific pathway after the action of the mdm12-mmm1 complex. Essential for establishing and maintaining the structure of mitochondria and maintenance of mtDNA nucleoids. This chain is Mitochondrial distribution and morphology protein 12, found in Schizosaccharomyces japonicus (strain yFS275 / FY16936) (Fission yeast).